The sequence spans 367 residues: GTP cyclohydrolase FolE2 (367 aa).

Belongs to the GTP cyclohydrolase IV family.

The enzyme catalyses GTP + H2O = 7,8-dihydroneopterin 3'-triphosphate + formate + H(+). The protein operates within cofactor biosynthesis; 7,8-dihydroneopterin triphosphate biosynthesis; 7,8-dihydroneopterin triphosphate from GTP: step 1/1. In terms of biological role, converts GTP to 7,8-dihydroneopterin triphosphate. This Roseobacter denitrificans (strain ATCC 33942 / OCh 114) (Erythrobacter sp. (strain OCh 114)) protein is GTP cyclohydrolase FolE2.